Reading from the N-terminus, the 164-residue chain is Large ribosomal subunit protein uL15 (164 aa).

Residues 1–14 show a composition bias toward polar residues; sequence MKLNEIQDNPGSSK. The disordered stretch occupies residues 1-35; it reads MKLNEIQDNPGSSKSRMRVGRGIGSGKGKTCGRGV. Residues 21–35 are compositionally biased toward gly residues; the sequence is RGIGSGKGKTCGRGV.

It belongs to the universal ribosomal protein uL15 family. In terms of assembly, part of the 50S ribosomal subunit.

Binds to the 23S rRNA. The polypeptide is Large ribosomal subunit protein uL15 (Methylocella silvestris (strain DSM 15510 / CIP 108128 / LMG 27833 / NCIMB 13906 / BL2)).